A 485-amino-acid polypeptide reads, in one-letter code: GTPase Obg (485 aa).

Residues 2–159 form the Obg domain; the sequence is PRFVDRVVIH…RDLTLELKTV (158 aa). The region spanning 160 to 341 is the OBG-type G domain; the sequence is ADVGLIGFPS…LIFALWEMVK (182 aa). Residues 166–173, 191–195, 212–215, 292–295, and 322–324 contribute to the GTP site; these read GFPSAGKS, FTTLV, DVPG, NKID, and STV. 2 residues coordinate Mg(2+): Ser-173 and Thr-193. The 79-residue stretch at 359 to 437 folds into the OCT domain; that stretch reads PIPVDESGFT…IGDVTFDWEP (79 aa). The interval 450-485 is disordered; the sequence is RGTDIRLEQTDRVGAAERKAARRERRQPGESGGEDS. A compositionally biased stretch (basic and acidic residues) spans 452-468; it reads TDIRLEQTDRVGAAERK.

Belongs to the TRAFAC class OBG-HflX-like GTPase superfamily. OBG GTPase family. In terms of assembly, monomer. The cofactor is Mg(2+).

It is found in the cytoplasm. An essential GTPase which binds GTP, GDP and possibly (p)ppGpp with moderate affinity, with high nucleotide exchange rates and a fairly low GTP hydrolysis rate. Plays a role in control of the cell cycle, stress response, ribosome biogenesis and in those bacteria that undergo differentiation, in morphogenesis control. This is GTPase Obg from Mycolicibacterium smegmatis (strain ATCC 700084 / mc(2)155) (Mycobacterium smegmatis).